Here is a 623-residue protein sequence, read N- to C-terminus: Lamin-B2.L (623 aa).

The segment covering 1 to 18 has biased composition (low complexity); it reads MATTTPSRSTRSSMQSPA. Positions 1 to 30 are disordered; it reads MATTTPSRSTRSSMQSPARGTSTPLSPTRI. Positions 2–27 are head; it reads ATTTPSRSTRSSMQSPARGTSTPLSP. Residues 19-30 are compositionally biased toward polar residues; sequence RGTSTPLSPTRI. Ser26 is modified (phosphoserine). The interval 28-64 is coil 1A; it reads TRISRLQEKEELRHLNDRLAVYIDRVRALELENDRLM. Residues 35 to 391 enclose the IF rod domain; the sequence is EKEELRHLND…KLLEGEEERL (357 aa). The tract at residues 64-74 is linker 1; the sequence is MVKISEKEEVT. Residues 75-211 form a coil 1B region; sequence TREVSGIKNL…QSLQEEMDFR (137 aa). Residues 212–235 form a linker 2 region; the sequence is KNIYEEESRETRKRHERRIVEVDR. The coil 2 stretch occupies residues 236–378; it reads GHHYDYESKL…VKLALDLEIN (143 aa). The tract at residues 380–592 is tail; it reads YRKLLEGEEE…VTKSVLRNVE (213 aa). Disordered regions lie at residues 388–473 and 591–623; these read EERL…LSQQ and VEEE…CSVM. Ser396 is modified (phosphoserine). A compositionally biased stretch (low complexity) spans 398 to 416; it reads ESRVTVSRATSSSSSATRT. Positions 420–425 match the Nuclear localization signal motif; it reads KRRRVE. The segment covering 443-473 has biased composition (polar residues); it reads LGSSRITASEGSSRTITSGQSSTTRFHLSQQ. Residues 468-585 enclose the LTD domain; it reads FHLSQQASAT…EEVAVRTVTK (118 aa). The span at 592–604 shows a compositional bias: acidic residues; it reads EEEEDEDADFGEE. Polar residues predominate over residues 612–623; sequence DPRTTSRGCSVM. Cysteine methyl ester is present on Cys620. A lipid anchor (S-farnesyl cysteine) is attached at Cys620. The propeptide at 621-623 is removed in mature form; it reads SVM.

It belongs to the intermediate filament family. In terms of processing, phosphorylation plays a key role in lamin organization, subcellular localization and nuclear envelope disintegration. Phosphorylation by CDK1 at Ser-26 at the onset of mitosis drives lamin disassembly and nuclear envelope breakdown.

It is found in the nucleus lamina. Its subcellular location is the nucleus envelope. The protein localises to the nucleus. The protein resides in the nucleoplasm. It localises to the nucleus matrix. Lamins are intermediate filament proteins that assemble into a filamentous meshwork, and which constitute the major components of the nuclear lamina, a fibrous layer on the nucleoplasmic side of the inner nuclear membrane. Lamins provide a framework for the nuclear envelope, bridging the nuclear envelope and chromatin, thereby playing an important role in nuclear assembly, chromatin organization, nuclear membrane and telomere dynamics. The structural integrity of the lamina is strictly controlled by the cell cycle, as seen by the disintegration and formation of the nuclear envelope in prophase and telophase, respectively. The chain is Lamin-B2.L (lmnb2.L) from Xenopus laevis (African clawed frog).